The chain runs to 212 residues: Leucyl/phenylalanyl-tRNA--protein transferase (212 aa).

It belongs to the L/F-transferase family.

It localises to the cytoplasm. The catalysed reaction is N-terminal L-lysyl-[protein] + L-leucyl-tRNA(Leu) = N-terminal L-leucyl-L-lysyl-[protein] + tRNA(Leu) + H(+). It catalyses the reaction N-terminal L-arginyl-[protein] + L-leucyl-tRNA(Leu) = N-terminal L-leucyl-L-arginyl-[protein] + tRNA(Leu) + H(+). The enzyme catalyses L-phenylalanyl-tRNA(Phe) + an N-terminal L-alpha-aminoacyl-[protein] = an N-terminal L-phenylalanyl-L-alpha-aminoacyl-[protein] + tRNA(Phe). Functionally, functions in the N-end rule pathway of protein degradation where it conjugates Leu, Phe and, less efficiently, Met from aminoacyl-tRNAs to the N-termini of proteins containing an N-terminal arginine or lysine. In Paracoccus denitrificans (strain Pd 1222), this protein is Leucyl/phenylalanyl-tRNA--protein transferase.